We begin with the raw amino-acid sequence, 836 residues long: Transcription factor vrtR2 (836 aa).

The segment covering 1 to 26 (MPSLSSKTSTMQRSCRPQMSACPNQQ) has biased composition (polar residues). The disordered stretch occupies residues 1-29 (MPSLSSKTSTMQRSCRPQMSACPNQQQKD). The segment at residues 37-63 (CVLCRDRKLKCDKLDPCSNCTSSGVAC) is a DNA-binding region (zn(2)-C6 fungal-type). Positions 72 to 114 (PRGRHARTVQTKASTPPDTRRRGSSNESTTAPAPDDGGLGTHI) are disordered. The segment covering 79 to 88 (TVQTKASTPP) has biased composition (polar residues).

The protein resides in the nucleus. Its function is as follows. Probable transcription factor that regulates expression of the gene cluster that mediates the biosynthesis of viridicatumtoxin, a tetracycline-like fungal meroterpenoid with a unique, fused spirobicyclic ring system. This Penicillium aethiopicum protein is Transcription factor vrtR2.